The primary structure comprises 309 residues: Jacalin-related lectin 25 (309 aa).

The Jacalin-type lectin domain occupies 8–190 (MFKVGPIGSQ…LTSIGIYVCP (183 aa)).

It belongs to the jacalin lectin family.

The polypeptide is Jacalin-related lectin 25 (JAL25) (Arabidopsis thaliana (Mouse-ear cress)).